Reading from the N-terminus, the 284-residue chain is 2-dehydro-3-deoxyphosphooctonate aldolase (284 aa).

The protein belongs to the KdsA family.

The protein localises to the cytoplasm. The enzyme catalyses D-arabinose 5-phosphate + phosphoenolpyruvate + H2O = 3-deoxy-alpha-D-manno-2-octulosonate-8-phosphate + phosphate. It participates in carbohydrate biosynthesis; 3-deoxy-D-manno-octulosonate biosynthesis; 3-deoxy-D-manno-octulosonate from D-ribulose 5-phosphate: step 2/3. The protein operates within bacterial outer membrane biogenesis; lipopolysaccharide biosynthesis. This Pectobacterium atrosepticum (strain SCRI 1043 / ATCC BAA-672) (Erwinia carotovora subsp. atroseptica) protein is 2-dehydro-3-deoxyphosphooctonate aldolase.